Reading from the N-terminus, the 179-residue chain is MSRIGLKPIEIPNGVEVKVTEDNLCTVKGPKGELVEQMPKEMIIKVEDNTITVSRPSEIKRHKSLHGLTRTLVFNMIEGVTEGYKKTLIIEGTGYRAAKQGKKLVLNLGYSHTIEKEDPEGISVEVPEQHTLIISGINKQQVGNYAAKIRDLRGPEPYKGKGIRYEDEHIRRKVGKTGK.

This sequence belongs to the universal ribosomal protein uL6 family. As to quaternary structure, part of the 50S ribosomal subunit.

Functionally, this protein binds to the 23S rRNA, and is important in its secondary structure. It is located near the subunit interface in the base of the L7/L12 stalk, and near the tRNA binding site of the peptidyltransferase center. In Finegoldia magna (strain ATCC 29328 / DSM 20472 / WAL 2508) (Peptostreptococcus magnus), this protein is Large ribosomal subunit protein uL6.